Here is a 606-residue protein sequence, read N- to C-terminus: Calmegin (606 aa).

The signal sequence occupies residues 1 to 19 (MRFQGFWLCLGLLFISVNA). Residues 20 to 466 (EFMDDSVEME…QLMSATEQRP (447 aa)) lie on the Lumenal side of the membrane. The residue at position 124 (Lys-124) is an N6-acetyllysine. Cys-147 and Cys-181 are disulfide-bonded. The interval 255–308 (PPINPPKEIEDPTDEKPDDWDERAKIPDASAVKPEDWDESEPPQIVDSSAVKPD) is disordered. 8 consecutive repeat copies span residues 263–276 (IEDP…DWDE), 280–293 (IPDA…DWDE), 299–312 (IVDS…GWLD), 318–331 (IPDP…DWNE), 335–348 (GEWE…PACR), 352–365 (GEWS…PKYK), 366–379 (GIWR…PNYQ), and 380–393 (GIWS…PDYF). Over residues 265 to 275 (DPTDEKPDDWD) the composition is skewed to acidic residues. The tract at residues 313–346 (NEPEFIPDPNAEKPFDWNEDMDGEWEAPHISNPA) is interaction with PPIB. A disulfide bridge links Cys-347 with Cys-351. A helical membrane pass occupies residues 467 to 487 (WLWFIYLLTAALPIALIGSFC). Residues 488–606 (WPRKVKKKYE…SVRKRRVRKE (119 aa)) lie on the Cytoplasmic side of the membrane. Positions 518 to 544 (EVKEEKAALEKPVDLEEEKKQSDGEIV) are enriched in basic and acidic residues. The segment at 518–606 (EVKEEKAALE…SVRKRRVRKE (89 aa)) is disordered. Acidic residues predominate over residues 545–567 (EKEEEGEPEEKSEEEIEIIEGQE). A phosphoserine mark is found at Ser-556, Ser-572, Ser-575, Ser-577, Ser-587, Ser-590, and Ser-597. The span at 568–579 (EGNKSNKSGSED) shows a compositional bias: basic and acidic residues. The span at 597 to 606 (SVRKRRVRKE) shows a compositional bias: basic residues.

Belongs to the calreticulin family. In terms of assembly, interacts with PPIB and PDILT. Interacts with ADAM2.

Its subcellular location is the endoplasmic reticulum membrane. Functions during spermatogenesis as a chaperone for a range of client proteins that are important for sperm adhesion onto the egg zona pellucida and for subsequent penetration of the zona pellucida. Required for normal sperm migration from the uterus into the oviduct. Required for normal male fertility. Binds calcium ions. The protein is Calmegin (CLGN) of Bos taurus (Bovine).